A 151-amino-acid polypeptide reads, in one-letter code: Protein PLANT CADMIUM RESISTANCE 1 (151 aa).

2 consecutive transmembrane segments (helical) span residues 31 to 47 (ITLC…AEIV) and 54 to 71 (CCAA…TSCG).

It belongs to the cornifelin family. In terms of assembly, homopentamer. In terms of tissue distribution, expressed in aerial part, but not in roots. Detected in the guard and mesophyll cells.

The protein localises to the cell membrane. Involved in glutathione-independent cadmium resistance. Reduces cadmium uptake rather than activating efflux, but is not closely coupled to calcium transporter. This Arabidopsis thaliana (Mouse-ear cress) protein is Protein PLANT CADMIUM RESISTANCE 1 (PCR1).